Consider the following 178-residue polypeptide: CASP-like protein 4D1 (178 aa).

Ala-2 is modified (N-acetylalanine). Over Ala-2–Arg-14 the chain is Cytoplasmic. Residues Thr-15–Ile-35 traverse the membrane as a helical segment. The Extracellular segment spans residues Ser-36 to Arg-60. A helical membrane pass occupies residues Tyr-61–Ile-81. At Ser-82–Asp-97 the chain is on the cytoplasmic side. The chain crosses the membrane as a helical span at residues Phe-98–Val-118. At Ser-119–Ala-149 the chain is on the extracellular side. The helical transmembrane segment at Ser-150 to Leu-170 threads the bilayer. Topologically, residues Ser-171–Ser-178 are cytoplasmic.

Belongs to the Casparian strip membrane proteins (CASP) family. As to quaternary structure, homodimer and heterodimers. Expressed in the root epidermis.

The protein resides in the cell membrane. The protein is CASP-like protein 4D1 of Arabidopsis thaliana (Mouse-ear cress).